Consider the following 268-residue polypeptide: Interleukin-1 beta (268 aa).

A propeptide spanning residues 1 to 115 (MAAVPDTSDM…DNWDEGYVCD (115 aa)) is cleaved from the precursor.

Belongs to the IL-1 family. As to quaternary structure, monomer. In its precursor form, weakly interacts with full-length MEFV; the mature cytokine does not interact at all. Interacts with integrins ITGAV:ITGBV and ITGA5:ITGB1; integrin-binding is required for IL1B signaling. Interacts with cargo receptor TMED10; the interaction is direct and is required for the secretion of IL1B mature form. Interacts with HSP90AB1; the interaction facilitates cargo translocation into the ERGIC. Interacts with HSP90B1; the interaction facilitates cargo translocation into the ERGIC.

It localises to the cytoplasm. Its subcellular location is the cytosol. The protein localises to the secreted. It is found in the lysosome. The protein resides in the extracellular exosome. In terms of biological role, potent pro-inflammatory cytokine. Initially discovered as the major endogenous pyrogen, induces prostaglandin synthesis, neutrophil influx and activation, T-cell activation and cytokine production, B-cell activation and antibody production, and fibroblast proliferation and collagen production. Promotes Th17 differentiation of T-cells. Synergizes with IL12/interleukin-12 to induce IFNG synthesis from T-helper 1 (Th1) cells. Plays a role in angiogenesis by inducing VEGF production synergistically with TNF and IL6. Involved in transduction of inflammation downstream of pyroptosis: its mature form is specifically released in the extracellular milieu by passing through the gasdermin-D (GSDMD) pore. The polypeptide is Interleukin-1 beta (IL1B) (Equus caballus (Horse)).